Consider the following 111-residue polypeptide: Large ribosomal subunit protein uL22 (111 aa).

The protein belongs to the universal ribosomal protein uL22 family. As to quaternary structure, part of the 50S ribosomal subunit.

Its function is as follows. This protein binds specifically to 23S rRNA; its binding is stimulated by other ribosomal proteins, e.g. L4, L17, and L20. It is important during the early stages of 50S assembly. It makes multiple contacts with different domains of the 23S rRNA in the assembled 50S subunit and ribosome. Functionally, the globular domain of the protein is located near the polypeptide exit tunnel on the outside of the subunit, while an extended beta-hairpin is found that lines the wall of the exit tunnel in the center of the 70S ribosome. The chain is Large ribosomal subunit protein uL22 from Citrifermentans bemidjiense (strain ATCC BAA-1014 / DSM 16622 / JCM 12645 / Bem) (Geobacter bemidjiensis).